The following is a 504-amino-acid chain: Maturase K (504 aa).

Belongs to the intron maturase 2 family. MatK subfamily.

The protein localises to the plastid. Its subcellular location is the chloroplast. Functionally, usually encoded in the trnK tRNA gene intron. Probably assists in splicing its own and other chloroplast group II introns. This Adenostoma fasciculatum (Chamise) protein is Maturase K.